The following is a 327-amino-acid chain: Biotin synthase (327 aa).

The 230-residue stretch at 44 to 273 (FMGNKFDTCS…NAFLRFSGGR (230 aa)) folds into the Radical SAM core domain. Residues cysteine 62, cysteine 66, and cysteine 69 each contribute to the [4Fe-4S] cluster site. [2Fe-2S] cluster-binding residues include cysteine 138, cysteine 198, and arginine 268.

The protein belongs to the radical SAM superfamily. Biotin synthase family. In terms of assembly, homodimer. The cofactor is [4Fe-4S] cluster. [2Fe-2S] cluster serves as cofactor.

The enzyme catalyses (4R,5S)-dethiobiotin + (sulfur carrier)-SH + 2 reduced [2Fe-2S]-[ferredoxin] + 2 S-adenosyl-L-methionine = (sulfur carrier)-H + biotin + 2 5'-deoxyadenosine + 2 L-methionine + 2 oxidized [2Fe-2S]-[ferredoxin]. The protein operates within cofactor biosynthesis; biotin biosynthesis; biotin from 7,8-diaminononanoate: step 2/2. Functionally, catalyzes the conversion of dethiobiotin (DTB) to biotin by the insertion of a sulfur atom into dethiobiotin via a radical-based mechanism. This chain is Biotin synthase, found in Parabacteroides distasonis (strain ATCC 8503 / DSM 20701 / CIP 104284 / JCM 5825 / NCTC 11152).